The primary structure comprises 312 residues: DNA-directed RNA polymerase subunit alpha (312 aa).

An alpha N-terminal domain (alpha-NTD) region spans residues 1 to 225; it reads MIEFEKPNIT…VEHFKVFESA (225 aa). An alpha C-terminal domain (alpha-CTD) region spans residues 243-312; sequence KEKKLEMTIE…DLGLSLRQED (70 aa).

It belongs to the RNA polymerase alpha chain family. Homodimer. The RNAP catalytic core consists of 2 alpha, 1 beta, 1 beta' and 1 omega subunit. When a sigma factor is associated with the core the holoenzyme is formed, which can initiate transcription.

The catalysed reaction is RNA(n) + a ribonucleoside 5'-triphosphate = RNA(n+1) + diphosphate. In terms of biological role, DNA-dependent RNA polymerase catalyzes the transcription of DNA into RNA using the four ribonucleoside triphosphates as substrates. This Lactobacillus helveticus (strain DPC 4571) protein is DNA-directed RNA polymerase subunit alpha.